We begin with the raw amino-acid sequence, 529 residues long: Beta-hexosaminidase subunit alpha (529 aa).

A signal peptide spans 1–22 (MASSRLWFSLLLAAALAGRATA). The propeptide occupies 23-88 (LWPWPQNIQT…PRPYLTGKRH (66 aa)). Residues cysteine 58 and cysteine 104 are joined by a disulfide bond. Residues asparagine 115, asparagine 157, and asparagine 295 are each glycosylated (N-linked (GlcNAc...) asparagine). An intrachain disulfide couples cysteine 277 to cysteine 328. Catalysis depends on glutamate 323, which acts as the Proton donor. Residues 423–424 (NR) are critical for hydrolysis GM2 gangliosides. Residues cysteine 505 and cysteine 522 are joined by a disulfide bond.

Belongs to the glycosyl hydrolase 20 family. There are 3 beta-hexosaminidase isozymes: isozyme A (hexosaminidase A) is a heterodimer composed of one subunit alpha and one subunit beta (chain A and B); isozyme B (hexosaminidase B) is a homodimer of two beta subunits (two chains A and B); isozyme S (hexosaminidase S) is a homodimer of two alpha subunits. The composition of the dimer (isozyme A versus isozyme S) has a significant effect on the substrate specificity of the alpha subunit active site.

The protein resides in the lysosome. It carries out the reaction Hydrolysis of terminal non-reducing N-acetyl-D-hexosamine residues in N-acetyl-beta-D-hexosaminides.. The catalysed reaction is N-acetyl-beta-D-galactosaminyl-(1-&gt;4)-beta-D-3-sulfogalactosyl-(1-&gt;4)-beta-D-glucosyl-(1&lt;-&gt;1')-ceramide + H2O = a beta-D-3-sulfogalactosyl-(1-&gt;4)-beta-D-glucosyl-(1&lt;-&gt;1')-ceramide + N-acetyl-beta-D-galactosamine. It catalyses the reaction a ganglioside GM2 (d18:1(4E)) + H2O = a ganglioside GM3 (d18:1(4E)) + N-acetyl-beta-D-galactosamine. The enzyme catalyses a ganglioside GM2 + H2O = a ganglioside GM3 + N-acetyl-beta-D-galactosamine. It carries out the reaction beta-D-GalNAc-(1-&gt;4)-alpha-L-IdoA-(1-&gt;3)-beta-D-GalNAc-4-sulfate-(1-&gt;4)-alpha-L-IdoA-(1-&gt;3)-D-GalNAc-4-sulfate + H2O = alpha-L-IdoA-(1-&gt;3)-beta-D-GalNAc-4-sulfate-(1-&gt;4)-alpha-L-IdoA-(1-&gt;3)-D-GalNAc-4-sulfate + N-acetyl-D-galactosamine. The catalysed reaction is N-acetyl-beta-D-6-sulfogalactosaminyl-(1-&gt;4)-alpha-L-iduronyl-(1-&gt;3)-N-acetyl-D-6-sulfogalactosamine + H2O = alpha-L-iduronyl-(1-&gt;3)-N-acetyl-D-6-sulfogalactosamine + N-acetyl-D-6-sulfogalactosamine. With respect to regulation, addition of GM2A stimulates the hydrolysis of sulfated glycosphingolipid SM2 and the ganglioside GM2. Hydrolyzes the non-reducing end N-acetyl-D-hexosamine and/or sulfated N-acetyl-D-hexosamine of glycoconjugates, such as the oligosaccharide moieties from proteins and neutral glycolipids, or from certain mucopolysaccharides. The isozyme S is as active as the isozyme A on the anionic bis-sulfated glycans, the chondroitin-6-sulfate trisaccharide (C6S-3), and the dermatan sulfate pentasaccharide, and the sulfated glycosphingolipid SM2. The isozyme B does not hydrolyze each of these substrates, however hydrolyzes efficiently neutral oligosaccharide. Only the isozyme A is responsible for the degradation of GM2 gangliosides in the presence of GM2A. The polypeptide is Beta-hexosaminidase subunit alpha (Pongo abelii (Sumatran orangutan)).